The following is a 1066-amino-acid chain: Cytoplasmic dynein 2 intermediate chain 1 (1066 aa).

Disordered regions lie at residues 22 to 366 and 381 to 408; these read LWAI…ENAR and YEDD…LEEL. S30 bears the Phosphoserine mark. Basic and acidic residues-rich tracts occupy residues 30–135, 147–171, 180–256, 264–308, and 316–336; these read SKEE…EELR, ETRD…RSEE, DEDR…EERH, GFHF…KRDG, and NLVR…HEEG. Residue S247 is modified to Phosphoserine. Acidic residues-rich tracts occupy residues 351-362 and 381-397; these read ETVEIEKEETDL and YEDD…ESSN. Residues 399-408 show a composition bias toward basic and acidic residues; it reads PESREKLEEL. Residues 473 to 552 are binding to the DYNLT2B-DYNLT1/DYNLT3 dimer; the sequence is ASHRQKSRTQ…DIQTEEIETR (80 aa). WD repeat units lie at residues 694 to 734, 775 to 821, 907 to 947, and 952 to 992; these read ICES…RLHY, VHKK…KADI, IRPV…PLLQ, and TDSH…LGPV.

The protein belongs to the dynein light intermediate chain family. Intermediate chain of the cytoplasmic dynein complex 2, a multisubunit complex, composed at least of eleven different proteins. The cytoplasmic dynein 2 complex consists of two catalytic heavy chains (HCs) and a number of non-catalytic subunits presented by intermediate chains (ICs), light intermediate chains (LICs) and light chains (LCs). Among them, a heavy chain (DYNC2H1), two intermediate chains (DYNC2I2 and DYNC2I1), a light intermediate chain (DYNC2LI1), and a light chain (DYNLT2B) are unique to the cytoplasmic dynein complex 2, but a subset of the light chains are also shared by dynein-1 and dynein-2 complexes. Interacts with DYNC2I2; their C-terminal domains each bind a copy of the heavy chain, and their extended N-terminal regions are held together by an array of light chain dimers. Interacts with DYNLT2B. Interacts (via the N-terminal half) with DYNLT2B-DYNLT1 dimer or with DYNLT2B-DYNLT3 dimer; this interaction is crucial for retrograde trafficking of ciliary proteins. As to expression, expressed in chondrocytes (at protein level).

It is found in the cell projection. The protein localises to the cilium. The protein resides in the cytoplasm. Its subcellular location is the cytoskeleton. It localises to the microtubule organizing center. It is found in the centrosome. Acts as one of several non-catalytic accessory components of the cytoplasmic dynein 2 complex (dynein-2 complex), a motor protein complex that drives the movement of cargos along microtubules within cilia and flagella in concert with the intraflagellar transport (IFT) system. DYNC2I1 plays a major role in retrograde ciliary protein trafficking in cilia and flagella. Also requires to maintain a functional transition zone. This is Cytoplasmic dynein 2 intermediate chain 1 from Homo sapiens (Human).